A 357-amino-acid polypeptide reads, in one-letter code: S-adenosyl-L-methionine:benzoic acid/salicylic acid carboxyl methyltransferase 2 (357 aa).

Tyrosine 18 lines the S-adenosyl-L-homocysteine pocket. Glutamine 25 is a benzoate binding site. S-adenosyl-L-homocysteine is bound by residues cysteine 59, asparagine 64, aspartate 96, leucine 97, serine 135, and phenylalanine 136. Tryptophan 157 is a benzoate binding site. The Mg(2+) site is built by asparagine 168, aspartate 254, phenylalanine 256, and asparagine 257. Glutamine 260 contributes to the benzoate binding site.

The protein belongs to the methyltransferase superfamily. Type-7 methyltransferase family. As to expression, predominantly expressed in petal limbs and tubes of corollas.

The enzyme catalyses benzoate + S-adenosyl-L-methionine = methyl benzoate + S-adenosyl-L-homocysteine. The catalysed reaction is salicylate + S-adenosyl-L-methionine = methyl salicylate + S-adenosyl-L-homocysteine. The protein operates within aromatic compound metabolism. Its function is as follows. Converts benzoic acid into the volatile ester methyl benzoates. This scent, mostly produced in a rhythmical, diurnal manner, attracts the pollinators. The sequence is that of S-adenosyl-L-methionine:benzoic acid/salicylic acid carboxyl methyltransferase 2 from Petunia hybrida (Petunia).